The primary structure comprises 323 residues: Prenyl transferase (323 aa).

Positions 46, 49, and 81 each coordinate isopentenyl diphosphate. Mg(2+) is bound by residues aspartate 88 and aspartate 92. Residue arginine 97 participates in an all-trans-polyprenyl diphosphate binding. Arginine 98 lines the isopentenyl diphosphate pocket. An all-trans-polyprenyl diphosphate contacts are provided by lysine 174, threonine 175, and glutamine 212.

The protein belongs to the FPP/GGPP synthase family. Mg(2+) is required as a cofactor.

The protein resides in the plastid. The protein localises to the chloroplast. Its function is as follows. Possible role in synthesis of the nonaprenyl side chain of plastoquinone or in synthesis of other prenyl chains such as undekaprenyl pyrophosphate. In Porphyra purpurea (Red seaweed), this protein is Prenyl transferase (preA).